We begin with the raw amino-acid sequence, 681 residues long: U3 small nucleolar ribonucleoprotein protein MPP10 (681 aa).

S61, S120, and S140 each carry phosphoserine. The stretch at 109–139 (ECEDEECEEDASEVEADNQENLETDLDEEQL) forms a coiled coil. Acidic residues predominate over residues 111–144 (EDEECEEDASEVEADNQENLETDLDEEQLSDEGG). Disordered regions lie at residues 111-202 (EDEE…SVVD), 215-256 (LEKV…GRQK), and 268-365 (YKDF…EKRQ). A compositionally biased stretch (basic and acidic residues) spans 145–163 (DVPKGRDRAKSSRKSDPRK). Residues S164, S168, and S172 each carry the phosphoserine modification. Residues 215 to 227 (LEKVEKEEEKRPD) are compositionally biased toward basic and acidic residues. Composition is skewed to acidic residues over residues 228–248 (GEEE…DESE) and 273–322 (DPVE…EDEN). Phosphoserine is present on residues S244, S247, S277, and S346. Residues 349-383 (AVKQESDEVKSSFEKRQEKMNEKIASLEKELLDKK) adopt a coiled-coil conformation. A Glycyl lysine isopeptide (Lys-Gly) (interchain with G-Cter in SUMO2) cross-link involves residue K351. The segment covering 352-365 (QESDEVKSSFEKRQ) has biased composition (basic and acidic residues). Glycyl lysine isopeptide (Lys-Gly) (interchain with G-Cter in SUMO2) cross-links involve residues K383 and K395. Residues 471 to 491 (AEIYEQEYLKLNQQKTEEEDN) are a coiled coil. K556 participates in a covalent cross-link: Glycyl lysine isopeptide (Lys-Gly) (interchain with G-Cter in SUMO2). A compositionally biased stretch (basic and acidic residues) spans 560-576 (KAGDLKTAAEKTATDKK). Residues 560-644 (KAGDLKTAAE…RKDKPLKSSQ (85 aa)) form a disordered region. The stretch at 575–604 (KKRERRKKKYQKRLKIKEKEKRKKLLEKNN) forms a coiled coil. Positions 577–599 (RERRKKKYQKRLKIKEKEKRKKL) are enriched in basic residues. Position 609 is an N6-acetyllysine (K609). The segment covering 630–640 (LLKDERKDKPL) has biased composition (basic and acidic residues). Glycyl lysine isopeptide (Lys-Gly) (interchain with G-Cter in SUMO2) cross-links involve residues K632 and K649. The segment at 657–681 (QINDAKQPEKIKKKKQDISVHKLKL) is disordered. Positions 662 to 681 (KQPEKIKKKKQDISVHKLKL) are enriched in basic and acidic residues.

This sequence belongs to the MPP10 family. As to quaternary structure, part of the small subunit (SSU) processome, composed of more than 70 proteins and the RNA chaperone small nucleolar RNA (snoRNA) U3. Component of a heterotrimeric complex containing IMP3, IMP4 and MPHOSPH10. Interacts with IMP3 and IMP4. In terms of processing, phosphorylated in M (mitotic) phase.

It is found in the nucleus. The protein resides in the nucleolus. Its subcellular location is the chromosome. In terms of biological role, component of the 60-80S U3 small nucleolar ribonucleoprotein (U3 snoRNP). Required for the early cleavages during pre-18S ribosomal RNA processing. Part of the small subunit (SSU) processome, first precursor of the small eukaryotic ribosomal subunit. During the assembly of the SSU processome in the nucleolus, many ribosome biogenesis factors, an RNA chaperone and ribosomal proteins associate with the nascent pre-rRNA and work in concert to generate RNA folding, modifications, rearrangements and cleavage as well as targeted degradation of pre-ribosomal RNA by the RNA exosome. The protein is U3 small nucleolar ribonucleoprotein protein MPP10 (Mphosph10) of Mus musculus (Mouse).